The sequence spans 275 residues: Bis(5'-nucleosyl)-tetraphosphatase, symmetrical (275 aa).

This sequence belongs to the Ap4A hydrolase family.

The enzyme catalyses P(1),P(4)-bis(5'-adenosyl) tetraphosphate + H2O = 2 ADP + 2 H(+). In terms of biological role, hydrolyzes diadenosine 5',5'''-P1,P4-tetraphosphate to yield ADP. In Nitrosospira multiformis (strain ATCC 25196 / NCIMB 11849 / C 71), this protein is Bis(5'-nucleosyl)-tetraphosphatase, symmetrical.